We begin with the raw amino-acid sequence, 80 residues long: Protein Vpu (80 aa).

Topologically, residues 1-6 (MYILGL) are extracellular. The helical transmembrane segment at 7 to 27 (GIGALVVTFIIAVIVWTIVYI) threads the bilayer. At 28–80 (EYKKLVRQKKIDRLIERIGERAEDSGNESDGDTEELSKLMEMGHLNLGYVADL) the chain is on the cytoplasmic side. S52 and S56 each carry phosphoserine; by host CK2.

This sequence belongs to the HIV-1 VPU protein family. In terms of assembly, homopentamer. Interacts with host CD4 and BRTC; these interactions induce proteasomal degradation of CD4. Interacts with host BST2; this interaction leads to the degradation of host BST2. Interacts with host FBXW11. Interacts with host AP1M1; this interaction plays a role in the mistrafficking and subsequent degradation of host BST2. Interacts with host RANBP2; this interaction allows Vpu to down-regulate host BLM sumoylation. Phosphorylated by host CK2. This phosphorylation is necessary for interaction with human BTRC and degradation of CD4.

It is found in the host membrane. Ion channel activity is inhibited by hexamethylene amiloride in vitro. Functionally, enhances virion budding by targeting host CD4 and Tetherin/BST2 to proteasome degradation. Degradation of CD4 prevents any unwanted premature interactions between viral Env and its host receptor CD4 in the endoplasmic reticulum. Degradation of antiretroviral protein Tetherin/BST2 is important for virion budding, as BST2 tethers new viral particles to the host cell membrane. Mechanistically, Vpu bridges either CD4 or BST2 to BTRC, a substrate recognition subunit of the Skp1/Cullin/F-box protein E3 ubiquitin ligase, induces their ubiquitination and subsequent proteasomal degradation. The alteration of the E3 ligase specificity by Vpu seems to promote the degradation of host IKBKB, leading to NF-kappa-B down-regulation and subsequent apoptosis. Acts as a viroporin that forms an oligomeric ion channel in membranes. Modulates the host DNA repair mechanisms to promote degradation of nuclear viral cDNA in cells that are already productively infected in order to suppress immune sensing and proviral hyper-integration (superinfection). Manipulates PML-NBs and modulates SUMOylation of host BLM protein thereby enhancing its DNA-end processing activity toward viral unintegrated linear DNA. Also inhibits RAD52-mediated homologous repair of viral cDNA, preventing the generation of dead-end circular forms of single copies of the long terminal repeat and permitting sustained nucleolytic attack. This chain is Protein Vpu, found in Human immunodeficiency virus type 1 group M subtype H (isolate 90CF056) (HIV-1).